The sequence spans 113 residues: Protein NATD1 (113 aa).

The region spanning 22–112 is the N-acetyltransferase domain; that stretch reads EHDRRRRQFT…PLPQYLERLQ (91 aa).

This sequence belongs to the NATD1 family.

The chain is Protein NATD1 (NATD1) from Homo sapiens (Human).